Here is a 459-residue protein sequence, read N- to C-terminus: Cysteine--tRNA ligase (459 aa).

Cysteine 29 is a binding site for Zn(2+). The 'HIGH' region signature appears at 31–41 (PTVYNLVHIGN). Zn(2+) contacts are provided by cysteine 209, histidine 234, and glutamate 238. A 'KMSKS' region motif is present at residues 267–271 (KMSKS). An ATP-binding site is contributed by lysine 270.

This sequence belongs to the class-I aminoacyl-tRNA synthetase family. Monomer. Zn(2+) is required as a cofactor.

Its subcellular location is the cytoplasm. It catalyses the reaction tRNA(Cys) + L-cysteine + ATP = L-cysteinyl-tRNA(Cys) + AMP + diphosphate. This chain is Cysteine--tRNA ligase, found in Saccharophagus degradans (strain 2-40 / ATCC 43961 / DSM 17024).